Consider the following 530-residue polypeptide: Pentatricopeptide repeat-containing protein At3g51320 (530 aa).

PPR repeat units lie at residues 82-116 (KLYC…GFVP), 117-151 (DSYT…GCDQ), 152-182 (VLPV…IPKR), 183-217 (DIVS…NIIS), 218-248 (WNIM…GFQG), 249-283 (NEST…FLNS), 284-314 (SVVI…LSIR), 315-349 (NKVT…MLRP), 350-380 (DEVT…MVDE), and 386-420 (NFGH…DVTP). The tract at residues 424-499 (KWANLLSSSR…IPGCGLVDLK (76 aa)) is type E motif.

This sequence belongs to the PPR family. PCMP-E subfamily.

The polypeptide is Pentatricopeptide repeat-containing protein At3g51320 (Arabidopsis thaliana (Mouse-ear cress)).